Reading from the N-terminus, the 444-residue chain is Ubiquitin carboxyl-terminal hydrolase MINDY-3 (444 aa).

The active-site Nucleophile is the cysteine 51. Serine 124 carries the phosphoserine modification. Histidine 286 functions as the Proton acceptor in the catalytic mechanism.

This sequence belongs to the MINDY deubiquitinase family. FAM188 subfamily. In terms of assembly, interacts with COPS5.

It is found in the nucleus. The catalysed reaction is Thiol-dependent hydrolysis of ester, thioester, amide, peptide and isopeptide bonds formed by the C-terminal Gly of ubiquitin (a 76-residue protein attached to proteins as an intracellular targeting signal).. Functionally, hydrolase that can remove 'Lys-48'-linked conjugated ubiquitin from proteins. The chain is Ubiquitin carboxyl-terminal hydrolase MINDY-3 from Mus musculus (Mouse).